The primary structure comprises 1143 residues: MFERTLVDLIRGIRNHKKNETKFINQCINEIKEELKGDMQKKTVAVQKLTYIQMLGFDISWASFKIVEVMSCNKFSSKRIGYLAASQSFNEGTDVIVLATHQIRKDFLSSNQSEAYLALNCLSNICTTDLARELANDILTLLSTQKTHILKRAITVLYKIFLRYPESLRPAFPKLREKLDDPEPSVVSCSVNVICELARRNPKNYLPLAPVLFRILTNTTNNYWMLIKIVKLFAALTPHEPRLGKKLIDPLTNIINSSPSVSLLYECIQTCITGMSDHIPLMKLCISKLRTLIEHNDQNLKYLGLLALNNIMKIHPKAVSEHRDLVLNCLEDDDISIRLRALDLLPGMTSKKNIGDIVFKLLDHLDNAEGQYKEQIIEKIIELCSMGTYQFITDFEWYINILVKLSQIQDSIHGKLIASQLLDVVIRVKIVRAYSTRQMIELLKNPKLMSNPTEGGMCEVLYAAAWIVGEFSGYVNRPIDALEAFLQPRVCVLPSHIQSVYMLNSLKVFSHACAKANGDKIPSLDDDDEEEEAQEEEDQNEITHEIVQECLEIIKSRLTIFTHSIYLNVQERACLINELLSFYTVTKEQGNNISKELISLFTEQLNPVGPKAQKKVPIPEGLDLDEWINDPKHQEPIEEDEDDDIFNTSTSSHQKKHHKHHRGGYDGDDDEDDETNSSHSGHSSSNFNRHPIDIQRQKEERLRKQANNPYMLGGKVSKKLSTNDPENIPVVQLTGDLGHLHVGASSNRPMPSKGSKKTKKHYTIDTTTEMPEGAKESDDEDEKDNKYKNDALSNINLSEPLTASDVLHTSRHRTDIIKEKEREMAMLAKKNAKLSPKSPPSTANYSEVTSPEIAPAKKATKKAAAGSNPPPPPTAKKSSKKPAATSSTTTTTKSTQAAAAVVAPPPVIVKKVLKTILDDDNFKITCEILKVSPSNETDNNQIKLTMKVQNKTDEDMSDVSISLKNPAEQCVSIKNSGEIGVLEADASTTHTELLNVVNVLNSQELQFTLLASPSSSPSITNQLSIDLPFSFFIVATKLPKDKFAEILQKSGQVSAMDSTKITGQSLTMPLVIEKLAQQLSIEVVQAHPNGQTASFYAKTTQNHHIAMLVKEKDGNISFDIKSPQSLLNQILVKEIAQLTFSSK.

HEAT repeat units lie at residues 129–166 (DLAR…RYPE), 167–203 (SLRP…RNPK), 205–242 (YLPL…HEPR), 245–279 (KKLI…SDHI), 280–317 (PLMK…IHPK), 318–354 (AVSE…KKNI), 356–389 (DIVF…MGTY), and 416–455 (LIAS…PTEG). Disordered regions lie at residues 520–541 (KIPS…DQNE), 634–692 (QEPI…RHPI), 704–728 (KQAN…PENI), 741–792 (HVGA…NDAL), and 829–899 (KKNA…QAAA). Over residues 524-540 (LDDDDEEEEAQEEEDQN) the composition is skewed to acidic residues. Residues 526–550 (DDDEEEEAQEEEDQNEITHEIVQEC) are a coiled coil. A compositionally biased stretch (basic residues) spans 653–662 (HQKKHHKHHR). The segment covering 666 to 675 (DGDDDEDDET) has biased composition (acidic residues). Residues 814–835 (TDIIKEKEREMAMLAKKNAKLS) adopt a coiled-coil conformation. Over residues 840–849 (PSTANYSEVT) the composition is skewed to polar residues. 2 stretches are compositionally biased toward low complexity: residues 854–867 (APAK…AAGS) and 881–899 (KPAA…QAAA). The GAE domain maps to 914–1016 (KTILDDDNFK…FTLLASPSSS (103 aa)).

This sequence belongs to the adaptor complexes large subunit family. As to quaternary structure, adaptor protein complex 3 (AP-3) is a heterotetramer composed of two large adaptins (delta-type subunit and beta-type subunit), a medium adaptin (mu-type subunit) and a small adaptin (sigma-type subunit).

The protein resides in the endosome membrane. Functionally, part of the AP-3 complex, an adaptor-related complex which is essential for the compartmentalization of the endocytic pathway. In Dictyostelium discoideum (Social amoeba), this protein is AP-3 complex subunit delta (ap3d1).